Consider the following 54-residue polypeptide: Beta-2-microglobulin (54 aa).

In terms of domain architecture, Ig-like C1-type spans 3–41 (KVELSDLSFNKDWSFYLLAHREFVPTATDKYACRVSHIT).

It belongs to the beta-2-microglobulin family. As to quaternary structure, heterodimer of an alpha chain and a beta chain. Beta-2-microglobulin is the beta-chain of major histocompatibility complex class I molecules.

Its subcellular location is the secreted. In terms of biological role, component of the class I major histocompatibility complex (MHC). Involved in the presentation of peptide antigens to the immune system. The polypeptide is Beta-2-microglobulin (B2M) (Mesocricetus auratus (Golden hamster)).